The sequence spans 248 residues: mRNA-decapping protein OPG122 (248 aa).

The 183-residue stretch at 45 to 227 folds into the Nudix hydrolase domain; that stretch reads HKRVSVSAIL…IAKYALDTAK (183 aa). The Nudix box signature appears at 126–147; sequence GIPKRGENVPECLSREIKEEVN. A Mg(2+)-binding site is contributed by E132. E141 serves as the catalytic Nucleophile. Position 145 (E145) interacts with Mn(2+). Mg(2+) is bound at residue D167.

This sequence belongs to the Nudix hydrolase family. It depends on Mg(2+) as a cofactor. Mn(2+) is required as a cofactor.

The protein localises to the host mitochondrion. Decapping enzyme that remove the protective 5'-cap from both host and viral mRNAs to commit transcripts for decay by the cellular exonuclease XRN1. Preferentially targets spliced mRNAs and since all viral genes are intronless, it preferentially targets host over viral transcripts. Acceleration of the turnover of cellular transcripts promotes the shutoff of host protein synthesis and therefore diminish the magnitude of antiviral response. This Vaccinia virus (strain Copenhagen) (VACV) protein is mRNA-decapping protein OPG122 (OPG122).